The sequence spans 242 residues: UPF0273 protein MJ1359 (242 aa).

In terms of domain architecture, KaiC spans 2–242 (KRVKTGIPGM…VYPDKVLKLR (241 aa)). An ATP-binding site is contributed by 29-36 (GGPGTGKS).

This sequence belongs to the UPF0273 family.

This Methanocaldococcus jannaschii (strain ATCC 43067 / DSM 2661 / JAL-1 / JCM 10045 / NBRC 100440) (Methanococcus jannaschii) protein is UPF0273 protein MJ1359.